A 144-amino-acid polypeptide reads, in one-letter code: Ferredoxin-thioredoxin reductase catalytic chain, chloroplastic (144 aa).

The transit peptide at 1–31 (MKALQASIAYSFPISSPAASPRRFSRVIRAQ) directs the protein to the chloroplast. [4Fe-4S] cluster is bound at residue Cys83. The Nucleophile role is filled by Cys85. The cysteines at positions 85 and 115 are disulfide-linked. Residues Cys102, Cys104, and Cys113 each coordinate [4Fe-4S] cluster.

Belongs to the ferredoxin thioredoxin reductase beta subunit family. As to quaternary structure, heterodimer of subunit A (variable subunit) and subunit B (catalytic subunit). Heterodimeric FTR forms a complex with ferredoxin and thioredoxin. [4Fe-4S] cluster serves as cofactor.

The protein localises to the plastid. It localises to the chloroplast. The catalysed reaction is [thioredoxin]-disulfide + 2 reduced [2Fe-2S]-[ferredoxin] + 2 H(+) = [thioredoxin]-dithiol + 2 oxidized [2Fe-2S]-[ferredoxin]. In terms of biological role, catalytic subunit of the ferredoxin-thioredoxin reductase (FTR), which catalyzes the two-electron reduction of thioredoxins by the electrons provided by reduced ferredoxin. The sequence is that of Ferredoxin-thioredoxin reductase catalytic chain, chloroplastic (FTRC) from Spinacia oleracea (Spinach).